We begin with the raw amino-acid sequence, 388 residues long: S-adenosylmethionine synthase (388 aa).

Position 16 (histidine 16) interacts with ATP. Aspartate 18 provides a ligand contact to Mg(2+). Glutamate 44 is a binding site for K(+). L-methionine-binding residues include glutamate 57 and glutamine 100. Residues glutamine 100–lysine 110 form a flexible loop region. ATP contacts are provided by residues aspartate 167 to lysine 169, arginine 233 to phenylalanine 234, aspartate 242, arginine 248 to lysine 249, alanine 265, and lysine 269. Aspartate 242 is a binding site for L-methionine. Residue lysine 273 coordinates L-methionine.

Belongs to the AdoMet synthase family. In terms of assembly, homotetramer; dimer of dimers. It depends on Mg(2+) as a cofactor. K(+) serves as cofactor.

The protein resides in the cytoplasm. The enzyme catalyses L-methionine + ATP + H2O = S-adenosyl-L-methionine + phosphate + diphosphate. The protein operates within amino-acid biosynthesis; S-adenosyl-L-methionine biosynthesis; S-adenosyl-L-methionine from L-methionine: step 1/1. Catalyzes the formation of S-adenosylmethionine (AdoMet) from methionine and ATP. The overall synthetic reaction is composed of two sequential steps, AdoMet formation and the subsequent tripolyphosphate hydrolysis which occurs prior to release of AdoMet from the enzyme. The sequence is that of S-adenosylmethionine synthase from Polynucleobacter necessarius subsp. necessarius (strain STIR1).